The sequence spans 219 residues: Cytidylate kinase (219 aa).

10–18 is an ATP binding site; sequence GPAAAGKST.

The protein belongs to the cytidylate kinase family. Type 1 subfamily.

It is found in the cytoplasm. It catalyses the reaction CMP + ATP = CDP + ADP. It carries out the reaction dCMP + ATP = dCDP + ADP. This chain is Cytidylate kinase, found in Staphylococcus aureus (strain bovine RF122 / ET3-1).